Consider the following 364-residue polypeptide: Peptide chain release factor 2 (364 aa).

Gln-251 is subject to N5-methylglutamine.

The protein belongs to the prokaryotic/mitochondrial release factor family. Post-translationally, methylated by PrmC. Methylation increases the termination efficiency of RF2.

It localises to the cytoplasm. Its function is as follows. Peptide chain release factor 2 directs the termination of translation in response to the peptide chain termination codons UGA and UAA. The protein is Peptide chain release factor 2 of Sulfurovum sp. (strain NBC37-1).